The following is a 353-amino-acid chain: Inositol 3-kinase (353 aa).

ATP contacts are provided by residues serine 197, 247-250 (GAGD), and asparagine 274. The active-site Proton acceptor is the aspartate 250.

It belongs to the carbohydrate kinase pfkB family.

The catalysed reaction is myo-inositol + ATP = 1D-myo-inositol 3-phosphate + ADP + H(+). In terms of biological role, kinase that phosphorylates myo-inositol to produce multiple myo-inositol monophosphates. Participates in phytic acid biosynthesis in developing seeds. Phytic acid is the primary storage form of phosphorus in cereal grains and other plant seeds. This Arabidopsis thaliana (Mouse-ear cress) protein is Inositol 3-kinase.